A 255-amino-acid chain; its full sequence is Zinc finger CCCH domain-containing protein 37 (255 aa).

2 consecutive C3H1-type zinc fingers follow at residues 98 to 128 and 137 to 159; these read AYTG…HGTF and YRTR…AHTA.

In Oryza sativa subsp. japonica (Rice), this protein is Zinc finger CCCH domain-containing protein 37.